The chain runs to 345 residues: 4-hydroxythreonine-4-phosphate dehydrogenase (345 aa).

Residues histidine 148 and threonine 149 each contribute to the substrate site. A divalent metal cation contacts are provided by histidine 182, histidine 227, and histidine 282. Residues lysine 290, asparagine 299, and arginine 308 each contribute to the substrate site.

Belongs to the PdxA family. As to quaternary structure, homodimer. Zn(2+) serves as cofactor. Mg(2+) is required as a cofactor. The cofactor is Co(2+).

It localises to the cytoplasm. It catalyses the reaction 4-(phosphooxy)-L-threonine + NAD(+) = 3-amino-2-oxopropyl phosphate + CO2 + NADH. It participates in cofactor biosynthesis; pyridoxine 5'-phosphate biosynthesis; pyridoxine 5'-phosphate from D-erythrose 4-phosphate: step 4/5. Its function is as follows. Catalyzes the NAD(P)-dependent oxidation of 4-(phosphooxy)-L-threonine (HTP) into 2-amino-3-oxo-4-(phosphooxy)butyric acid which spontaneously decarboxylates to form 3-amino-2-oxopropyl phosphate (AHAP). In Bradyrhizobium diazoefficiens (strain JCM 10833 / BCRC 13528 / IAM 13628 / NBRC 14792 / USDA 110), this protein is 4-hydroxythreonine-4-phosphate dehydrogenase.